The following is a 210-amino-acid chain: Large ribosomal subunit protein uL3 (210 aa).

Positions 123–144 (KRHGQSRGPMAHGSRYHRRPGS) are disordered.

It belongs to the universal ribosomal protein uL3 family. Part of the 50S ribosomal subunit. Forms a cluster with proteins L14 and L19.

Functionally, one of the primary rRNA binding proteins, it binds directly near the 3'-end of the 23S rRNA, where it nucleates assembly of the 50S subunit. In Alkaliphilus metalliredigens (strain QYMF), this protein is Large ribosomal subunit protein uL3.